A 185-amino-acid chain; its full sequence is NAD(P)H-dependent FAD/FMN reductase GTNG_3158 (185 aa).

As to quaternary structure, anthranilate 3-monooxygenase consists of a reductase component (GTNG_3158) and an oxygenase component HpaH.

It carries out the reaction FADH2 + NAD(+) = FAD + NADH + 2 H(+). The enzyme catalyses FADH2 + NADP(+) = FAD + NADPH + 2 H(+). Involved in the pathway of tryptophan degradation. Reduces FAD/FMN to FADH(2)/FMNH(2), which are subsequently used for the hydroxylation of anthranilate. It can reduce either FAD or flavin mononucleotide (FMN) but prefers FAD. The enzyme has a slight preference for NADPH as acceptor. The polypeptide is NAD(P)H-dependent FAD/FMN reductase GTNG_3158 (Geobacillus thermodenitrificans (strain NG80-2)).